The following is an 891-amino-acid chain: DNA mismatch repair protein MutS (891 aa).

Position 646–653 (Gly646–Ser653) interacts with ATP.

It belongs to the DNA mismatch repair MutS family.

Functionally, this protein is involved in the repair of mismatches in DNA. It is possible that it carries out the mismatch recognition step. This protein has a weak ATPase activity. The polypeptide is DNA mismatch repair protein MutS (Rickettsia typhi (strain ATCC VR-144 / Wilmington)).